The sequence spans 116 residues: Large ribosomal subunit protein uL18 (116 aa).

This sequence belongs to the universal ribosomal protein uL18 family. In terms of assembly, part of the 50S ribosomal subunit; part of the 5S rRNA/L5/L18/L25 subcomplex. Contacts the 5S and 23S rRNAs.

In terms of biological role, this is one of the proteins that bind and probably mediate the attachment of the 5S RNA into the large ribosomal subunit, where it forms part of the central protuberance. This chain is Large ribosomal subunit protein uL18, found in Shewanella loihica (strain ATCC BAA-1088 / PV-4).